The following is a 109-amino-acid chain: Small ribosomal subunit protein bS6 (109 aa).

The protein belongs to the bacterial ribosomal protein bS6 family.

Its function is as follows. Binds together with bS18 to 16S ribosomal RNA. The protein is Small ribosomal subunit protein bS6 of Dehalococcoides mccartyi (strain ATCC BAA-2266 / KCTC 15142 / 195) (Dehalococcoides ethenogenes (strain 195)).